The sequence spans 142 residues: Large ribosomal subunit protein uL13 (142 aa).

It belongs to the universal ribosomal protein uL13 family. Part of the 50S ribosomal subunit.

In terms of biological role, this protein is one of the early assembly proteins of the 50S ribosomal subunit, although it is not seen to bind rRNA by itself. It is important during the early stages of 50S assembly. In Aliivibrio fischeri (strain ATCC 700601 / ES114) (Vibrio fischeri), this protein is Large ribosomal subunit protein uL13.